The sequence spans 404 residues: tRNA/tmRNA (uracil-C(5))-methyltransferase (404 aa).

Residues Q218, Y251, N256, E272, and D332 each contribute to the S-adenosyl-L-methionine site. C358 serves as the catalytic Nucleophile. E392 acts as the Proton acceptor in catalysis.

It belongs to the class I-like SAM-binding methyltransferase superfamily. RNA M5U methyltransferase family. TrmA subfamily.

It catalyses the reaction uridine(54) in tRNA + S-adenosyl-L-methionine = 5-methyluridine(54) in tRNA + S-adenosyl-L-homocysteine + H(+). The enzyme catalyses uridine(341) in tmRNA + S-adenosyl-L-methionine = 5-methyluridine(341) in tmRNA + S-adenosyl-L-homocysteine + H(+). Functionally, dual-specificity methyltransferase that catalyzes the formation of 5-methyluridine at position 54 (m5U54) in all tRNAs, and that of position 341 (m5U341) in tmRNA (transfer-mRNA). The protein is tRNA/tmRNA (uracil-C(5))-methyltransferase of Helicobacter hepaticus (strain ATCC 51449 / 3B1).